The chain runs to 663 residues: Nuclear receptor-binding protein homolog (663 aa).

A compositionally biased stretch (low complexity) spans 1–14; the sequence is MSNSQANAGSSGSA. Residues 1 to 112 form a disordered region; it reads MSNSQANAGS…SEDESEILEE (112 aa). Residues 19 to 46 show a composition bias toward polar residues; it reads LNPSGSATLVPNLTTTNASSQATPASTI. Low complexity-rich tracts occupy residues 47-57 and 81-94; these read PQQQQPQQSQP and VVVA…NLDS. Over residues 101-111 the composition is skewed to acidic residues; sequence DDSEDESEILE. The 271-residue stretch at 122-392 folds into the Protein kinase domain; sequence REEVDQRDVP…ANDLLFHPLL (271 aa). Disordered regions lie at residues 481–505 and 638–663; these read PNFR…EPVD and YVPQ…TTSN. 3 positions are modified to phosphoserine: Ser-489, Ser-495, and Ser-498. Thr-500 bears the Phosphothreonine mark. Residues 641-652 are compositionally biased toward low complexity; it reads QDQQQYQQQQQE.

Belongs to the protein kinase superfamily. Ser/Thr protein kinase family.

It localises to the cytoplasm. Its subcellular location is the cell cortex. Functionally, may play a role in subcellular trafficking between the endoplasmic reticulum and Golgi apparatus. The sequence is that of Nuclear receptor-binding protein homolog from Drosophila pseudoobscura pseudoobscura (Fruit fly).